The following is a 655-amino-acid chain: p-hydroxybenzoic acid efflux pump subunit AaeB (655 aa).

11 helical membrane-spanning segments follow: residues 13 to 33 (FAVKLACAIVLALFIGFHFQL), 38 to 58 (WAVLTAAIVAAGPAFAAGGEP), 69 to 89 (LRIIGTFIGCIAALIIIISMI), 93 to 113 (LLMILVCCVWAGFCTWISSLV), 121 to 141 (WGLSGYTALIIVITIQMEPLL), 152 to 172 (EIVIGIGCAILADLLFSPRSI), 370 to 390 (LFWLWTGWTSGNGAMVMIAVV), 407 to 427 (FIYGTLAALPLGLLYFLVIIP), 431 to 451 (QSMLLLCLSLAVLGFFIGIEV), 459 to 479 (MGALASTINIIVLDNPMTFHF), and 482 to 502 (FLDSALGQIVGCMLAFIVILL).

Belongs to the aromatic acid exporter ArAE (TC 2.A.85) family.

It is found in the cell inner membrane. Functionally, forms an efflux pump with AaeA. Could function as a metabolic relief valve, allowing to eliminate certain compounds when they accumulate to high levels in the cell. The polypeptide is p-hydroxybenzoic acid efflux pump subunit AaeB (Salmonella heidelberg (strain SL476)).